We begin with the raw amino-acid sequence, 231 residues long: Sugar fermentation stimulation protein homolog (231 aa).

Belongs to the SfsA family.

The protein is Sugar fermentation stimulation protein homolog of Geotalea uraniireducens (strain Rf4) (Geobacter uraniireducens).